Consider the following 206-residue polypeptide: MVEEETITVEGDYETLIPIDEYLAAGVHIGTQQKTSDMMKYIYRVRTDGLYVLDVQATDKRIRLAGKFLANYEPSKILVVSARQYGQRPATMFAKAVGARANVGRFIPNTLTNPHFAGYIEPDVLLVTDPAGDGQAVKEAVDIGIPVVALCDTNNMTSNVDLVIPTNNKGRKALTLIYWLLARQVLRERGEEDRFKYTVSDFEMEF.

The protein belongs to the universal ribosomal protein uS2 family.

The protein is Small ribosomal subunit protein uS2 of Methanothrix thermoacetophila (strain DSM 6194 / JCM 14653 / NBRC 101360 / PT) (Methanosaeta thermophila).